Consider the following 255-residue polypeptide: tRNA (guanine-N(7)-)-methyltransferase (255 aa).

The tract at residues 1–35 (MTRTNDASGGGKLPRKRFYRARAHSNPLSDSHFPV) is disordered. Positions 13–23 (LPRKRFYRARA) are enriched in basic residues. S-adenosyl-L-methionine contacts are provided by residues glycine 75, 98–99 (EL), 131–132 (NS), and leucine 151. Aspartate 154 is a catalytic residue. 229–231 (TEE) serves as a coordination point for S-adenosyl-L-methionine.

The protein belongs to the class I-like SAM-binding methyltransferase superfamily. TrmB family.

It is found in the nucleus. It carries out the reaction guanosine(46) in tRNA + S-adenosyl-L-methionine = N(7)-methylguanosine(46) in tRNA + S-adenosyl-L-homocysteine. The protein operates within tRNA modification; N(7)-methylguanine-tRNA biosynthesis. In terms of biological role, catalyzes the formation of N(7)-methylguanine at position 46 (m7G46) in tRNA. The protein is tRNA (guanine-N(7)-)-methyltransferase of Zea mays (Maize).